A 420-amino-acid polypeptide reads, in one-letter code: UDP-N-acetylglucosamine 1-carboxyvinyltransferase (420 aa).

Residue 22–23 (KN) participates in phosphoenolpyruvate binding. Residue Arg-93 participates in UDP-N-acetyl-alpha-D-glucosamine binding. Cys-117 serves as the catalytic Proton donor. Position 117 is a 2-(S-cysteinyl)pyruvic acid O-phosphothioketal (Cys-117). Asp-307 and Ile-329 together coordinate UDP-N-acetyl-alpha-D-glucosamine.

This sequence belongs to the EPSP synthase family. MurA subfamily.

The protein localises to the cytoplasm. It catalyses the reaction phosphoenolpyruvate + UDP-N-acetyl-alpha-D-glucosamine = UDP-N-acetyl-3-O-(1-carboxyvinyl)-alpha-D-glucosamine + phosphate. The protein operates within cell wall biogenesis; peptidoglycan biosynthesis. In terms of biological role, cell wall formation. Adds enolpyruvyl to UDP-N-acetylglucosamine. This is UDP-N-acetylglucosamine 1-carboxyvinyltransferase from Saccharophagus degradans (strain 2-40 / ATCC 43961 / DSM 17024).